We begin with the raw amino-acid sequence, 330 residues long: Phenylalanine--tRNA ligase alpha subunit (330 aa).

Glu246 is a Mg(2+) binding site.

The protein belongs to the class-II aminoacyl-tRNA synthetase family. Phe-tRNA synthetase alpha subunit type 1 subfamily. In terms of assembly, tetramer of two alpha and two beta subunits. Requires Mg(2+) as cofactor.

The protein resides in the cytoplasm. It carries out the reaction tRNA(Phe) + L-phenylalanine + ATP = L-phenylalanyl-tRNA(Phe) + AMP + diphosphate + H(+). The protein is Phenylalanine--tRNA ligase alpha subunit of Sulfurimonas denitrificans (strain ATCC 33889 / DSM 1251) (Thiomicrospira denitrificans (strain ATCC 33889 / DSM 1251)).